A 511-amino-acid chain; its full sequence is GMP synthase [glutamine-hydrolyzing] (511 aa).

The Glutamine amidotransferase type-1 domain occupies 3 to 198; it reads SVLVLDFGSQ…LLNIAAITPD (196 aa). C80 (nucleophile) is an active-site residue. Residues H172 and E174 contribute to the active site. Positions 199-386 constitute a GMPS ATP-PPase domain; it reads WSSKSFIEHQ…LGIPEDILMR (188 aa). 226–232 is an ATP binding site; the sequence is SGGVDST.

As to quaternary structure, homodimer.

The catalysed reaction is XMP + L-glutamine + ATP + H2O = GMP + L-glutamate + AMP + diphosphate + 2 H(+). The protein operates within purine metabolism; GMP biosynthesis; GMP from XMP (L-Gln route): step 1/1. Functionally, catalyzes the synthesis of GMP from XMP. The polypeptide is GMP synthase [glutamine-hydrolyzing] (Chlorobium chlorochromatii (strain CaD3)).